Here is a 726-residue protein sequence, read N- to C-terminus: Catalase-peroxidase (726 aa).

Residues 1-33 (MSTSDDIHNTTATGKCPFHQGGHDQSAGAGTTT) form a disordered region. The segment at residues 105-226 (WHGAGTYRSI…LGATEMGLIY (122 aa)) is a cross-link (tryptophyl-tyrosyl-methioninium (Trp-Tyr) (with M-252)). Residue His-106 is the Proton acceptor of the active site. The segment at residues 226-252 (YVNPEGPDHSGEPLSAAAAIRATFGNM) is a cross-link (tryptophyl-tyrosyl-methioninium (Tyr-Met) (with W-105)). His-267 is a binding site for heme b.

Belongs to the peroxidase family. Peroxidase/catalase subfamily. Homodimer or homotetramer. Heme b serves as cofactor. Formation of the three residue Trp-Tyr-Met cross-link is important for the catalase, but not the peroxidase activity of the enzyme.

The enzyme catalyses H2O2 + AH2 = A + 2 H2O. The catalysed reaction is 2 H2O2 = O2 + 2 H2O. In terms of biological role, bifunctional enzyme with both catalase and broad-spectrum peroxidase activity. In Shigella boydii serotype 18 (strain CDC 3083-94 / BS512), this protein is Catalase-peroxidase.